Reading from the N-terminus, the 599-residue chain is DNA primase (599 aa).

A CHC2-type zinc finger spans residues 38–62; it reads CPFHQEKTPSFTVSDSKRFFYCFGC. A Toprim domain is found at 250 to 332; that stretch reads NYSILVEGYF…EKKISFIRLP (83 aa). Mg(2+) contacts are provided by glutamate 256, aspartate 300, and aspartate 302.

It belongs to the DnaG primase family. As to quaternary structure, monomer. Interacts with DnaB. Requires Zn(2+) as cofactor. Mg(2+) serves as cofactor.

It carries out the reaction ssDNA + n NTP = ssDNA/pppN(pN)n-1 hybrid + (n-1) diphosphate.. In terms of biological role, RNA polymerase that catalyzes the synthesis of short RNA molecules used as primers for DNA polymerase during DNA replication. This chain is DNA primase, found in Rickettsia bellii (strain RML369-C).